A 248-amino-acid polypeptide reads, in one-letter code: Aspartate/glutamate leucyltransferase (248 aa).

Belongs to the R-transferase family. Bpt subfamily.

The protein resides in the cytoplasm. It catalyses the reaction N-terminal L-glutamyl-[protein] + L-leucyl-tRNA(Leu) = N-terminal L-leucyl-L-glutamyl-[protein] + tRNA(Leu) + H(+). The catalysed reaction is N-terminal L-aspartyl-[protein] + L-leucyl-tRNA(Leu) = N-terminal L-leucyl-L-aspartyl-[protein] + tRNA(Leu) + H(+). In terms of biological role, functions in the N-end rule pathway of protein degradation where it conjugates Leu from its aminoacyl-tRNA to the N-termini of proteins containing an N-terminal aspartate or glutamate. The polypeptide is Aspartate/glutamate leucyltransferase (Methylorubrum extorquens (strain PA1) (Methylobacterium extorquens)).